The sequence spans 41 residues: Pi-stichotoxin-Hcr5a (41 aa).

Disulfide bonds link C4–C37, C6–C30, and C20–C38.

It belongs to the sea anemone type 3 (BDS) potassium channel toxin family.

It is found in the secreted. The protein localises to the nematocyst. In terms of biological role, weakly inhibits human homomeric ASIC3 (IC(50)=5.5 uM). The polypeptide is Pi-stichotoxin-Hcr5a (Radianthus crispa (Leathery sea anemone)).